A 437-amino-acid chain; its full sequence is Trigger factor (437 aa).

Positions 161 to 246 constitute a PPIase FKBP-type domain; it reads GDQVNINFVG…VNSVSEAVLP (86 aa).

This sequence belongs to the FKBP-type PPIase family. Tig subfamily.

Its subcellular location is the cytoplasm. The enzyme catalyses [protein]-peptidylproline (omega=180) = [protein]-peptidylproline (omega=0). Functionally, involved in protein export. Acts as a chaperone by maintaining the newly synthesized protein in an open conformation. Functions as a peptidyl-prolyl cis-trans isomerase. The chain is Trigger factor from Cellvibrio japonicus (strain Ueda107) (Pseudomonas fluorescens subsp. cellulosa).